The primary structure comprises 406 residues: Kelch domain-containing protein 1 (406 aa).

6 Kelch repeats span residues 24-76 (FLYV…CGAC), 80-134 (KLYI…VYKD), 135-181 (RLIY…TKTQ), 208-258 (KGYI…PIAD), 260-307 (KLFL…ACLG), and 311-361 (EIMV…LESQ).

As to quaternary structure, component of a CRL5 E3 ubiquitin-protein ligase complex, also named ECS (Elongin BC-CUL2/5-SOCS-box protein) complex, composed of CUL5, Elongin BC (ELOB and ELOC), RBX1 and substrate-specific adapter KLHDC1. Widely expressed, with high levels in skeletal muscle, pancreas and liver. Undetectable in peripheral blood leukocytes.

The protein localises to the cytoplasm. The protein resides in the cytosol. It participates in protein modification; protein ubiquitination. Functionally, substrate-recognition component of a Cul5-RING (CRL5) E3 ubiquitin-protein ligase complex of the DesCEND (destruction via C-end degrons) pathway, which recognizes a C-degron located at the extreme C terminus of target proteins, leading to their ubiquitination and degradation. The C-degron recognized by the DesCEND pathway is usually a motif of less than ten residues and can be present in full-length proteins, truncated proteins or proteolytically cleaved forms. The CRL5(KLHDC1) complex mediates ubiquitination and degradation of truncated SELENOS selenoprotein produced by failed UGA/Sec decoding, which ends with a glycine. This Homo sapiens (Human) protein is Kelch domain-containing protein 1.